A 401-amino-acid chain; its full sequence is Probable E3 ubiquitin-protein ligase RHC2A (401 aa).

The tract at residues 41 to 93 (TPSDSFTTTTTTQHRSPTRFPPPSSSSSTPSASMHADNSPTPTIVTRTRSNRS) is disordered. The span at 76-93 (ADNSPTPTIVTRTRSNRS) shows a compositional bias: polar residues. An RING-type; atypical zinc finger spans residues 201-242 (CAVCKENFVLKSSAREMPCNHIYHPDCILPWLAIRNSCPVCR).

It catalyses the reaction S-ubiquitinyl-[E2 ubiquitin-conjugating enzyme]-L-cysteine + [acceptor protein]-L-lysine = [E2 ubiquitin-conjugating enzyme]-L-cysteine + N(6)-ubiquitinyl-[acceptor protein]-L-lysine.. The protein operates within protein modification; protein ubiquitination. Functionally, probable E3 ubiquitin-protein ligase that may possess E3 ubiquitin ligase activity in vitro. This is Probable E3 ubiquitin-protein ligase RHC2A from Arabidopsis thaliana (Mouse-ear cress).